The sequence spans 225 residues: Uridylate kinase (225 aa).

9–10 contributes to the ATP binding site; that stretch reads GS. Residue Gly-44 participates in UMP binding. ATP-binding residues include Gly-45 and Arg-49. UMP is bound by residues Asp-66 and 114–120; that span reads THPGHTT. ATP-binding residues include Thr-140, Asn-141, Tyr-146, and Asp-149.

This sequence belongs to the UMP kinase family. In terms of assembly, homohexamer.

It localises to the cytoplasm. It catalyses the reaction UMP + ATP = UDP + ADP. It participates in pyrimidine metabolism; CTP biosynthesis via de novo pathway; UDP from UMP (UMPK route): step 1/1. Its activity is regulated as follows. Inhibited by UTP. In terms of biological role, catalyzes the reversible phosphorylation of UMP to UDP. The chain is Uridylate kinase from Thermococcus gammatolerans (strain DSM 15229 / JCM 11827 / EJ3).